The sequence spans 250 residues: 1-(5-phosphoribosyl)-5-[(5-phosphoribosylamino)methylideneamino] imidazole-4-carboxamide isomerase (250 aa).

Residue aspartate 8 is the Proton acceptor of the active site. The active-site Proton donor is the aspartate 131.

It belongs to the HisA/HisF family.

The protein resides in the cytoplasm. The enzyme catalyses 1-(5-phospho-beta-D-ribosyl)-5-[(5-phospho-beta-D-ribosylamino)methylideneamino]imidazole-4-carboxamide = 5-[(5-phospho-1-deoxy-D-ribulos-1-ylimino)methylamino]-1-(5-phospho-beta-D-ribosyl)imidazole-4-carboxamide. Its pathway is amino-acid biosynthesis; L-histidine biosynthesis; L-histidine from 5-phospho-alpha-D-ribose 1-diphosphate: step 4/9. This chain is 1-(5-phosphoribosyl)-5-[(5-phosphoribosylamino)methylideneamino] imidazole-4-carboxamide isomerase, found in Paraburkholderia xenovorans (strain LB400).